Here is a 661-residue protein sequence, read N- to C-terminus: Bifunctional polymyxin resistance protein ArnA (661 aa).

The interval 1–304 is formyltransferase ArnAFT; the sequence is MKAVVFAYHD…ALGLVSGAVI (304 aa). Histidine 104 acts as the Proton donor; for formyltransferase activity in catalysis. Residues arginine 114 and 136–140 each bind (6R)-10-formyltetrahydrofolate; that span reads VNRAD. Residues 314–661 form a dehydrogenase ArnADH region; it reads RRTRVLILGV…TVELVDDKNP (348 aa). Residues aspartate 347 and 368 to 369 each bind NAD(+); that span reads DI. Residues alanine 393, tyrosine 398, and 432 to 433 contribute to the UDP-alpha-D-glucuronate site; that span reads TS. Catalysis depends on glutamate 434, which acts as the Proton acceptor; for decarboxylase activity. Residues arginine 460, asparagine 492, 526–535, and tyrosine 613 contribute to the UDP-alpha-D-glucuronate site; that span reads KLIEGGKQKR. Residue arginine 619 is the Proton donor; for decarboxylase activity of the active site.

The protein in the N-terminal section; belongs to the Fmt family. UDP-L-Ara4N formyltransferase subfamily. In the C-terminal section; belongs to the NAD(P)-dependent epimerase/dehydratase family. UDP-glucuronic acid decarboxylase subfamily. In terms of assembly, homohexamer, formed by a dimer of trimers.

It catalyses the reaction UDP-alpha-D-glucuronate + NAD(+) = UDP-beta-L-threo-pentopyranos-4-ulose + CO2 + NADH. The catalysed reaction is UDP-4-amino-4-deoxy-beta-L-arabinose + (6R)-10-formyltetrahydrofolate = UDP-4-deoxy-4-formamido-beta-L-arabinose + (6S)-5,6,7,8-tetrahydrofolate + H(+). The protein operates within nucleotide-sugar biosynthesis; UDP-4-deoxy-4-formamido-beta-L-arabinose biosynthesis; UDP-4-deoxy-4-formamido-beta-L-arabinose from UDP-alpha-D-glucuronate: step 1/3. It functions in the pathway nucleotide-sugar biosynthesis; UDP-4-deoxy-4-formamido-beta-L-arabinose biosynthesis; UDP-4-deoxy-4-formamido-beta-L-arabinose from UDP-alpha-D-glucuronate: step 3/3. Its pathway is bacterial outer membrane biogenesis; lipopolysaccharide biosynthesis. Functionally, bifunctional enzyme that catalyzes the oxidative decarboxylation of UDP-glucuronic acid (UDP-GlcUA) to UDP-4-keto-arabinose (UDP-Ara4O) and the addition of a formyl group to UDP-4-amino-4-deoxy-L-arabinose (UDP-L-Ara4N) to form UDP-L-4-formamido-arabinose (UDP-L-Ara4FN). The modified arabinose is attached to lipid A and is required for resistance to polymyxin and cationic antimicrobial peptides. This chain is Bifunctional polymyxin resistance protein ArnA, found in Klebsiella pneumoniae subsp. pneumoniae (strain ATCC 700721 / MGH 78578).